Consider the following 901-residue polypeptide: Protein translocase subunit SecA (901 aa).

Residues glutamine 85, 103–107 (GEGKT), and aspartate 510 each bind ATP. The segment at 848–901 (RINQNNLPVDENSQTTQNSETEDYSDRRIGRNEPCPCGSGKKYKHCHGSRVARQ) is disordered. Residues 849–866 (INQNNLPVDENSQTTQNS) show a composition bias toward polar residues. Cysteine 882, cysteine 884, cysteine 893, and histidine 894 together coordinate Zn(2+). A compositionally biased stretch (basic residues) spans 888 to 901 (KKYKHCHGSRVARQ).

Belongs to the SecA family. In terms of assembly, monomer and homodimer. Part of the essential Sec protein translocation apparatus which comprises SecA, SecYEG and auxiliary proteins SecDF-YajC and YidC. It depends on Zn(2+) as a cofactor.

The protein resides in the cell inner membrane. It is found in the cytoplasm. It carries out the reaction ATP + H2O + cellular proteinSide 1 = ADP + phosphate + cellular proteinSide 2.. Its function is as follows. Part of the Sec protein translocase complex. Interacts with the SecYEG preprotein conducting channel. Has a central role in coupling the hydrolysis of ATP to the transfer of proteins into and across the cell membrane, serving both as a receptor for the preprotein-SecB complex and as an ATP-driven molecular motor driving the stepwise translocation of polypeptide chains across the membrane. The polypeptide is Protein translocase subunit SecA (Haemophilus influenzae (strain 86-028NP)).